A 69-amino-acid polypeptide reads, in one-letter code: Beta-defensin 114 (69 aa).

An N-terminal signal peptide occupies residues 1–26 (MRIFYYLHFLCYVTFILPATCTLVNA). Cystine bridges form between cysteine 29–cysteine 57, cysteine 36–cysteine 50, and cysteine 40–cysteine 58.

Belongs to the beta-defensin family. Expressed in epididymis, predominantly in the caput (at protein level).

It is found in the secreted. Functionally, has a salt-sensitive antimicrobial activity against Gram-negative bacteria, including E.coli, Gram-positive, including S.aureus, and fungi, including C.albicans. Binds to and neutralizes bacterial lipopolysaccharides (LPS), abolishing TNF production by macrophages challenged with LPS. Rescues the LPS-induced reduction of sperm motility in vitro and may protect from LPS-induced lethality. This chain is Beta-defensin 114 (DEFB114), found in Homo sapiens (Human).